The primary structure comprises 148 residues: Hemoglobin subunit beta (148 aa).

Positions 3-148 (XWTDXERHVI…AVAALGKQYH (146 aa)) constitute a Globin domain. Residues His-64 and His-93 each coordinate heme b.

This sequence belongs to the globin family. Heterotetramer of two alpha chains and two beta chains. Red blood cells.

Involved in oxygen transport from gills to the various peripheral tissues. This is Hemoglobin subunit beta (hbb) from Silurus asotus (Amur catfish).